The chain runs to 156 residues: Ribosomal RNA large subunit methyltransferase H (156 aa).

Residues L73, G104, and 123 to 128 contribute to the S-adenosyl-L-methionine site; that span reads VSSLTL.

It belongs to the RNA methyltransferase RlmH family. Homodimer.

It localises to the cytoplasm. The catalysed reaction is pseudouridine(1915) in 23S rRNA + S-adenosyl-L-methionine = N(3)-methylpseudouridine(1915) in 23S rRNA + S-adenosyl-L-homocysteine + H(+). In terms of biological role, specifically methylates the pseudouridine at position 1915 (m3Psi1915) in 23S rRNA. The polypeptide is Ribosomal RNA large subunit methyltransferase H (Burkholderia mallei (strain NCTC 10247)).